A 146-amino-acid polypeptide reads, in one-letter code: UPF0260 protein Sbal_1871 (146 aa).

The protein belongs to the UPF0260 family.

The protein is UPF0260 protein Sbal_1871 of Shewanella baltica (strain OS155 / ATCC BAA-1091).